The sequence spans 201 residues: Holliday junction branch migration complex subunit RuvA (201 aa).

Residues 1 to 64 (MYEYIRGQFQ…EDFIGLYGFT (64 aa)) are domain I. Residues 65 to 143 (TREELEMFKL…PDELTSEEGQ (79 aa)) form a domain II region. The flexible linker stretch occupies residues 144 to 152 (LIEGINDNS). A domain III region spans residues 153 to 201 (DYSFNINETLSALMALGYTEKEAQKALEKVDKTLSIENMIKESLKLLMR).

This sequence belongs to the RuvA family. In terms of assembly, homotetramer. Forms an RuvA(8)-RuvB(12)-Holliday junction (HJ) complex. HJ DNA is sandwiched between 2 RuvA tetramers; dsDNA enters through RuvA and exits via RuvB. An RuvB hexamer assembles on each DNA strand where it exits the tetramer. Each RuvB hexamer is contacted by two RuvA subunits (via domain III) on 2 adjacent RuvB subunits; this complex drives branch migration. In the full resolvosome a probable DNA-RuvA(4)-RuvB(12)-RuvC(2) complex forms which resolves the HJ.

The protein localises to the cytoplasm. In terms of biological role, the RuvA-RuvB-RuvC complex processes Holliday junction (HJ) DNA during genetic recombination and DNA repair, while the RuvA-RuvB complex plays an important role in the rescue of blocked DNA replication forks via replication fork reversal (RFR). RuvA specifically binds to HJ cruciform DNA, conferring on it an open structure. The RuvB hexamer acts as an ATP-dependent pump, pulling dsDNA into and through the RuvAB complex. HJ branch migration allows RuvC to scan DNA until it finds its consensus sequence, where it cleaves and resolves the cruciform DNA. This chain is Holliday junction branch migration complex subunit RuvA, found in Clostridium perfringens (strain 13 / Type A).